We begin with the raw amino-acid sequence, 336 residues long: tRNA N6-adenosine threonylcarbamoyltransferase (336 aa).

Fe cation contacts are provided by H111 and H115. Substrate contacts are provided by residues 134–138, D167, G180, and N270; that span reads LVSGG. D298 is a binding site for Fe cation.

It belongs to the KAE1 / TsaD family. It depends on Fe(2+) as a cofactor.

It is found in the cytoplasm. It carries out the reaction L-threonylcarbamoyladenylate + adenosine(37) in tRNA = N(6)-L-threonylcarbamoyladenosine(37) in tRNA + AMP + H(+). In terms of biological role, required for the formation of a threonylcarbamoyl group on adenosine at position 37 (t(6)A37) in tRNAs that read codons beginning with adenine. Is involved in the transfer of the threonylcarbamoyl moiety of threonylcarbamoyl-AMP (TC-AMP) to the N6 group of A37, together with TsaE and TsaB. TsaD likely plays a direct catalytic role in this reaction. The protein is tRNA N6-adenosine threonylcarbamoyltransferase of Acinetobacter baumannii (strain AB307-0294).